We begin with the raw amino-acid sequence, 275 residues long: Diaminopimelate epimerase (275 aa).

Residues asparagine 13, glutamine 46, and asparagine 66 each coordinate substrate. The active-site Proton donor is the cysteine 75. Substrate is bound by residues 76–77, asparagine 159, asparagine 192, and 210–211; these read GN and ER. Residue cysteine 219 is the Proton acceptor of the active site. 220-221 contributes to the substrate binding site; the sequence is GS.

Belongs to the diaminopimelate epimerase family. In terms of assembly, homodimer.

The protein resides in the cytoplasm. It carries out the reaction (2S,6S)-2,6-diaminopimelate = meso-2,6-diaminopimelate. It functions in the pathway amino-acid biosynthesis; L-lysine biosynthesis via DAP pathway; DL-2,6-diaminopimelate from LL-2,6-diaminopimelate: step 1/1. Its function is as follows. Catalyzes the stereoinversion of LL-2,6-diaminopimelate (L,L-DAP) to meso-diaminopimelate (meso-DAP), a precursor of L-lysine and an essential component of the bacterial peptidoglycan. This Idiomarina loihiensis (strain ATCC BAA-735 / DSM 15497 / L2-TR) protein is Diaminopimelate epimerase.